A 390-amino-acid polypeptide reads, in one-letter code: 5-hydroxytryptamine receptor 1B (390 aa).

Residues methionine 1–leucine 46 lie on the Extracellular side of the membrane. Residues asparagine 24 and asparagine 32 are each glycosylated (N-linked (GlcNAc...) asparagine). Residues proline 47–alanine 72 traverse the membrane as a helical segment. Residues threonine 73–tyrosine 86 lie on the Cytoplasmic side of the membrane. Residues leucine 87–valine 111 form a helical membrane-spanning segment. The Extracellular segment spans residues threonine 112–glutamine 119. The helical transmembrane segment at valine 120 to leucine 145 threads the bilayer. Cysteine 122 and cysteine 199 are disulfide-bonded. Ergotamine is bound by residues aspartate 129 and threonine 134. The short motif at aspartate 146–tyrosine 148 is the DRY motif; important for ligand-induced conformation changes and signaling element. The Cytoplasmic portion of the chain corresponds to aspartate 146–arginine 165. A helical membrane pass occupies residues alanine 166–proline 184. Topologically, residues phenylalanine 185–histidine 205 are extracellular. Valine 201 serves as a coordination point for ergotamine. A helical membrane pass occupies residues isoleucine 206–glycine 229. Over arginine 230–threonine 315 the chain is Cytoplasmic. Residues aspartate 259 to serine 272 show a composition bias toward polar residues. The tract at residues aspartate 259–serine 281 is disordered. Residues leucine 316–methionine 337 form a helical membrane-spanning segment. The Extracellular segment spans residues proline 338–histidine 347. The chain crosses the membrane as a helical span at residues leucine 348–threonine 370. Positions asparagine 365–tyrosine 369 match the NPxxY motif; important for ligand-induced conformation changes and signaling motif. At methionine 371–serine 390 the chain is on the cytoplasmic side. The S-palmitoyl cysteine moiety is linked to residue cysteine 388.

Belongs to the G-protein coupled receptor 1 family. Homodimer. Heterodimer with HTR1D. In terms of processing, phosphorylated. Desensitization of the receptor may be mediated by its phosphorylation. Palmitoylated. In terms of tissue distribution, detected in cerebral artery smooth muscle cells (at protein level). Detected in brain cortex, striatum, amygdala, medulla, hippocampus, caudate nucleus and putamen.

It is found in the cell membrane. In terms of biological role, G-protein coupled receptor for 5-hydroxytryptamine (serotonin). Also functions as a receptor for ergot alkaloid derivatives, various anxiolytic and antidepressant drugs and other psychoactive substances, such as lysergic acid diethylamide (LSD). Ligand binding causes a conformation change that triggers signaling via guanine nucleotide-binding proteins (G proteins) and modulates the activity of downstream effectors, such as adenylate cyclase. HTR1B is coupled to G(i)/G(o) G alpha proteins and mediates inhibitory neurotransmission by inhibiting adenylate cyclase activity. Arrestin family members inhibit signaling via G proteins and mediate activation of alternative signaling pathways. Regulates the release of 5-hydroxytryptamine, dopamine and acetylcholine in the brain, and thereby affects neural activity, nociceptive processing, pain perception, mood and behavior. Besides, plays a role in vasoconstriction of cerebral arteries. The sequence is that of 5-hydroxytryptamine receptor 1B from Homo sapiens (Human).